The chain runs to 274 residues: Large ribosomal subunit protein uL2 (274 aa).

The interval 224-274 is disordered; sequence VAMNPVDHPHGGGEGRTSGGRHPVTPWGIPTKGYKTRRNKRSNKLIVQKRK. The span at 257-274 shows a compositional bias: basic residues; that stretch reads YKTRRNKRSNKLIVQKRK.

It belongs to the universal ribosomal protein uL2 family. In terms of assembly, part of the 50S ribosomal subunit. Forms a bridge to the 30S subunit in the 70S ribosome.

In terms of biological role, one of the primary rRNA binding proteins. Required for association of the 30S and 50S subunits to form the 70S ribosome, for tRNA binding and peptide bond formation. It has been suggested to have peptidyltransferase activity; this is somewhat controversial. Makes several contacts with the 16S rRNA in the 70S ribosome. In Francisella tularensis subsp. holarctica (strain FTNF002-00 / FTA), this protein is Large ribosomal subunit protein uL2.